The sequence spans 135 residues: CDGSH iron-sulfur domain-containing protein 2A (135 aa).

The Lumenal portion of the chain corresponds to 1-37 (MVLESIARVIKVQLPAYLKRLPIPDSIAGFIRLTVSE). Residues 38-60 (WLRLLPFLGVLALLGYLAIRPFL) form a helical membrane-spanning segment. Topologically, residues 61–135 (LKKKQQKDSL…GPLILKKKEV (75 aa)) are cytoplasmic. [2Fe-2S] cluster contacts are provided by Cys99, Cys101, Cys110, and His114.

It belongs to the CISD protein family. CISD2 subfamily. Homodimer. [2Fe-2S] cluster serves as cofactor.

It is found in the endoplasmic reticulum membrane. Its subcellular location is the mitochondrion outer membrane. Its function is as follows. Regulator of autophagy that contributes to antagonize becn1-mediated cellular autophagy at the endoplasmic reticulum. Participates in the interaction of bcl2 with becn1 and is required for bcl2-mediated depression of endoplasmic reticulum Ca(2+) stores during autophagy. In Xenopus laevis (African clawed frog), this protein is CDGSH iron-sulfur domain-containing protein 2A (cisd2-a).